A 349-amino-acid polypeptide reads, in one-letter code: Cell adhesion molecule CEACAM8 (349 aa).

Residues methionine 1 to alanine 34 form the signal peptide. Positions glutamine 35–proline 142 constitute an Ig-like V-type domain. N-linked (GlcNAc...) asparagine glycosylation is found at asparagine 104, asparagine 111, asparagine 115, asparagine 152, asparagine 173, asparagine 197, asparagine 224, asparagine 256, asparagine 274, asparagine 288, and asparagine 309. Ig-like C2-type domains lie at proline 145 to asparagine 232 and proline 237 to serine 319. A disulfide bond links cysteine 167 and cysteine 215. A disulfide bridge connects residues cysteine 259 and cysteine 299. Aspartate 320 is lipidated: GPI-anchor amidated aspartate. A propeptide spans alanine 321–isoleucine 349 (removed in mature form).

It belongs to the immunoglobulin superfamily. CEA family. In terms of assembly, monomer. Heterodimer with CEACAM6; heterodimerizes via its Ig-like V-type domain. Glycosylated. As to expression, expressed in leukocytes of chronic myeloid Leukemia patients and bone marrow.

Its subcellular location is the cell membrane. The protein resides in the cell surface. Functionally, cell surface glycoprotein that plays a role in cell adhesion in a calcium-independent manner. Mediates heterophilic cell adhesion with other carcinoembryonic antigen-related cell adhesion molecules, such as CEACAM6. Heterophilic interaction with CEACAM8 occurs in activated neutrophils. The protein is Cell adhesion molecule CEACAM8 of Homo sapiens (Human).